The chain runs to 528 residues: ATP synthase subunit alpha 1 (528 aa).

An ATP-binding site is contributed by 177–184 (GDRQTGKT).

Belongs to the ATPase alpha/beta chains family. F-type ATPases have 2 components, CF(1) - the catalytic core - and CF(0) - the membrane proton channel. CF(1) has five subunits: alpha(3), beta(3), gamma(1), delta(1), epsilon(1). CF(0) has three main subunits: a(1), b(2) and c(9-12). The alpha and beta chains form an alternating ring which encloses part of the gamma chain. CF(1) is attached to CF(0) by a central stalk formed by the gamma and epsilon chains, while a peripheral stalk is formed by the delta and b chains.

It is found in the cell inner membrane. It carries out the reaction ATP + H2O + 4 H(+)(in) = ADP + phosphate + 5 H(+)(out). Its function is as follows. Produces ATP from ADP in the presence of a proton gradient across the membrane. The alpha chain is a regulatory subunit. The protein is ATP synthase subunit alpha 1 of Pseudoalteromonas atlantica (strain T6c / ATCC BAA-1087).